Reading from the N-terminus, the 125-residue chain is Snaclec alboaggregin-A subunit beta (125 aa).

The 125-residue stretch at 1–125 (GFDCPFGWSS…TRYPVCKFXG (125 aa)) folds into the C-type lectin domain. Intrachain disulfides connect cysteine 4-cysteine 15, cysteine 32-cysteine 121, and cysteine 98-cysteine 113.

The protein belongs to the snaclec family. As to quaternary structure, heterotetramer of the subunits alpha, alpha', beta and beta'; disulfide-linked. In terms of tissue distribution, expressed by the venom gland.

The protein resides in the secreted. In terms of biological role, potent platelet activator that aggregates platelets via both GPIbalpha (GP1BA) and GPVI (GP6). Induces a tyrosine phosphorylation profile in platelets that resembles this produced by collagen, involving the time dependent tyrosine phosphorylation of Fc receptor gamma chain (FCGR1A), phospholipase Cgamma2 (PLCG2), and LAT. This is Snaclec alboaggregin-A subunit beta from Trimeresurus albolabris (White-lipped pit viper).